Reading from the N-terminus, the 530-residue chain is Chaperonin GroEL (530 aa).

ATP-binding positions include 30–33 (TLGP), Lys-51, 87–91 (DGTTT), Gly-415, and Asp-495.

It belongs to the chaperonin (HSP60) family. Forms a cylinder of 14 subunits composed of two heptameric rings stacked back-to-back. Interacts with the co-chaperonin GroES.

It is found in the cytoplasm. It catalyses the reaction ATP + H2O + a folded polypeptide = ADP + phosphate + an unfolded polypeptide.. Its function is as follows. Together with its co-chaperonin GroES, plays an essential role in assisting protein folding. The GroEL-GroES system forms a nano-cage that allows encapsulation of the non-native substrate proteins and provides a physical environment optimized to promote and accelerate protein folding. The chain is Chaperonin GroEL from Carsonella ruddii (strain PV).